Here is a 120-residue protein sequence, read N- to C-terminus: U-scoloptoxin(16)-Er2a (120 aa).

A signal peptide spans Met-1 to Ala-26.

Belongs to the scoloptoxin-16 family. Post-translationally, contains 4 disulfide bonds. Expressed by the venom gland.

The protein localises to the secreted. This chain is U-scoloptoxin(16)-Er2a, found in Ethmostigmus rubripes (Giant centipede).